Reading from the N-terminus, the 172-residue chain is Cytochrome b6-f complex iron-sulfur subunit (172 aa).

The chain crosses the membrane as a helical span at residues 19–39; that stretch reads LNALLSGSVGVVVVGALYPVV. Residues 61–161 form the Rieske domain; it reads GKPISVSELL…ATVDGDNVRF (101 aa). Residues Cys-107, His-109, Cys-125, and His-128 each contribute to the [2Fe-2S] cluster site. The cysteines at positions 112 and 127 are disulfide-linked.

The protein belongs to the Rieske iron-sulfur protein family. As to quaternary structure, the 4 large subunits of the cytochrome b6-f complex are cytochrome b6, subunit IV (17 kDa polypeptide, PetD), cytochrome f and the Rieske protein, while the 4 small subunits are PetG, PetL, PetM and PetN. The complex functions as a dimer. Requires [2Fe-2S] cluster as cofactor.

The protein resides in the cellular thylakoid membrane. It carries out the reaction 2 oxidized [plastocyanin] + a plastoquinol + 2 H(+)(in) = 2 reduced [plastocyanin] + a plastoquinone + 4 H(+)(out). Its function is as follows. Component of the cytochrome b6-f complex, which mediates electron transfer between photosystem II (PSII) and photosystem I (PSI), cyclic electron flow around PSI, and state transitions. This is Cytochrome b6-f complex iron-sulfur subunit from Synechococcus sp. (strain JA-2-3B'a(2-13)) (Cyanobacteria bacterium Yellowstone B-Prime).